We begin with the raw amino-acid sequence, 403 residues long: Decapping and exoribonuclease protein 1 (403 aa).

An a divalent metal cation-binding site is contributed by Glu-223. Glu-260 contributes to the substrate binding site. A divalent metal cation contacts are provided by Asp-262, Glu-273, and Ile-274. Lys-275 and Gln-297 together coordinate substrate.

The protein belongs to the DXO/Dom3Z family. A divalent metal cation is required as a cofactor.

The protein localises to the cytoplasm. It carries out the reaction a 5'-end NAD(+)-phospho-ribonucleoside in mRNA + H2O = a 5'-end phospho-ribonucleoside in mRNA + NAD(+) + H(+). The catalysed reaction is a 5'-end (N(7)-methyl 5'-triphosphoguanosine)-ribonucleoside-ribonucleotide in mRNA + H2O = a (N(7)-methyl 5'-triphosphoguanosine)-nucleoside + a 5'-end phospho-ribonucleoside in mRNA + H(+). Its function is as follows. Decapping enzyme for NAD-capped RNAs: specifically hydrolyzes the nicotinamide adenine dinucleotide (NAD) cap from a subset of RNAs by removing the entire NAD moiety from the 5'-end of an NAD-capped RNA. The NAD-cap is present at the 5'-end of some RNAs and snoRNAs. In contrast to the canonical 5'-end N7 methylguanosine (m7G) cap, the NAD cap promotes mRNA decay. Also acts as a non-canonical decapping enzyme that removes the entire cap structure of m7G capped or incompletely capped RNAs and mediates their subsequent degradation. Has decapping and 5'-3' exonuclease activities. Has decapping activity toward incomplete 5'-end cap mRNAs such as unmethylated 5'-end-capped RNA to release GpppN and 5'-end monophosphate RNA. The 5'-end monophosphate RNA is then degraded by the 5'-3' exoribonuclease activity, enabling this enzyme to decap and degrade incompletely capped mRNAs. In Kluyveromyces lactis (strain ATCC 8585 / CBS 2359 / DSM 70799 / NBRC 1267 / NRRL Y-1140 / WM37) (Yeast), this protein is Decapping and exoribonuclease protein 1.